Reading from the N-terminus, the 316-residue chain is MLSEQTAASGSSSSSRGADDREIVISTGREIVVRSSGGEEREEEVVVEEELEEPEFRDIHALSPPPTPTPSQPSSSYHRRRRESWESAAGSRHTSIRSVGSDTAPSELFPTMSREFSAMVAAAANANAAAAAAANGGDSSRAGVDDALGRIGEDELEETNPLAIVPDSNPIPSPRRAHLALPAPGDVSSAGGGHGDEVSVGQVKKEEVESKIAAWQIAEVAKVNNRFKREEVVINGWEGDQVEKANAWLKKYERKLEEKRAKAMEKAQNEVAKARRKAEEKRASAEAKRGTKVARVLELANFMRAVGRAPSKRSFF.

3 disordered regions span residues 1-108 (MLSE…PSEL), 125-202 (NANA…SVGQ), and 267-287 (AQNE…SAEA). Residues 40–53 (EREEEVVVEEELEE) show a composition bias toward acidic residues. Positions 92–104 (RHTSIRSVGSDTA) are enriched in polar residues. Low complexity predominate over residues 125 to 135 (NANAAAAAAAN). 2 stretches are compositionally biased toward basic and acidic residues: residues 143-153 (GVDDALGRIGE) and 277-287 (KAEEKRASAEA). Residues 242–288 (VEKANAWLKKYERKLEEKRAKAMEKAQNEVAKARRKAEEKRASAEAK) are a coiled coil.

The protein belongs to the remorin family. As to quaternary structure, interacts with BAK1. Phosphorylated by BRI1. Phosphorylation reduces the binding affinity to BAK1. In terms of tissue distribution, expressed in roots, leaf blades and leaf sheaths. Expressed at low levels in stems and spikelets.

Its subcellular location is the cell membrane. In terms of biological role, functions in abscisic acid (ABA) signaling downstream of BZIP23. Acts as antagonistic and negative regulator of brassinosteroid (BR) signaling. Binds to BAK1 and inhibits its interaction with the BR receptor BRI1. Inhibits the formation and subsequent activation of the BRI1-BAK1 receptor complex. The sequence is that of Remorin 4.1 from Oryza sativa subsp. japonica (Rice).